Here is a 513-residue protein sequence, read N- to C-terminus: Cytochrome P450 86A1 (513 aa).

A helical membrane pass occupies residues 7 to 27 (ILTGYAVAALSVYALWFYFLS). Cysteine 456 serves as a coordination point for heme.

This sequence belongs to the cytochrome P450 family. It depends on heme as a cofactor. Expressed in roots.

The protein localises to the membrane. The enzyme catalyses an omega-methyl-long-chain fatty acid + reduced [NADPH--hemoprotein reductase] + O2 = an omega-hydroxy-long-chain fatty acid + oxidized [NADPH--hemoprotein reductase] + H2O + H(+). Its function is as follows. Catalyzes the omega-hydroxylation of various fatty acids (FA). Acts on saturated and unsaturated fatty acids with chain lengths from C12 to C18 but not on hexadecane. This Arabidopsis thaliana (Mouse-ear cress) protein is Cytochrome P450 86A1 (CYP86A1).